Here is a 1365-residue protein sequence, read N- to C-terminus: MLNRENKTAITRKGMVSNRLNKFSIRKYTVGTASILVGTTLIFGLGNQEAKAAESTNKELNEATTSASDNQSSDKVDMQQLNQEDNTKNDNQKEMVSSQGNETTSNGNKSIEKESVQSTTGNKVEVSTAKSDEQASPKSTNEDLNTKQTISNQEALQPDLQENKSVVNAQPTNEENKKVDAKTESTTLNVKSDAIKSNAETLVDNNSNSNNENNADIILPKSTAPKRLNTRMRIAAVQPSSTEAKNVNDLITSNTTLTVVDADKNNKIVPAQDYLELKSQIKVDDKVKSGDYFTIKYSDTVQVYGLNPEDIKNIGDIKDPNNGETIATAKHDTANNLITYTFTDYVDRFNSVQMGINYSIYMDADTIPVSKNDVEFNVTIGNTTTKTTANIQYPDYVVNEKNSIGSAFTETVSHVGNKENPGYYKQTIYVNPSENSLTNAKLKVQAYHSSYPNNIGQINKEVTDIKIYQVPKGYTLNKGYDVNTKELTDVTNQYLQKITYGDNNSAVIDFGNADSAYVVMVNTKFQYTTSESPTLVQMVTLSSNNSKSASMGNALGFTNNQSGGAGQEVYKIGNYVWEDTNKNGVQELGEKGVGNVTVTVFDNNTNTKVGEAVTKEDGSYLIPNLPNGDYRVEFSNLPKGYEVTPSKQGNNEELDSNGLSSVITVNGKDNLSADLGIYKPKYNLGDYVWEDTNKNGIQDQDEKGISGVTVTLKDENGNVLKTVTTDADGKYKFTDLDNGNYKVEFTTPEGYTPTTVTSGSDIEKDSNGLTTTGVINGADNMTLDSGFYKTPKYNLGNYVWEDTNKDGKQDSTEKGISGVTVTLKNENGEVLQTTKTDKDGKYQFTGLENGTYKVEFETPSGYTPTQVGSGTDEGIDSNGTSTTGVIKDKDNDTIDSGFYKPTYNLGDYVWEDTNKNGVQDKDEKGISGVTVTLKDENDKVLKTVTTDENGKYQFTDLNNGTYKVEFETPSGYTPTSVTSGNDTEKDSNGLTTTGVIKDADNMTLDSGFYKTPKYSLGDYVWYDSNKDGKQDSTEKGIKDVKVTLLNEKGEVIGTTKTDENGKYRFDNLDSGKYKVIFEKPAGLTQTGTNTTEDDKDADGGEVDVTITDHDDFTLDNGYFEEDTSDSDSDSDSDSDSDSDSDSDSDSDSDSDSDSDSDSDSDSDSDSDSDSDSDSDSDSDSDSDSDSDSDSDSDSDSDSDSDSDSDSDSDSDSDSDSDSDSDSDSESDSDSDSDSDSDSDSDSDSDSDSDSDSDSDSDSDSDSDSDSDSDSDSDSDSDSDSDSDSDSDSDSDSDSDSDSDSDSDSDAGKHTPVKPMSTTKDHHNKAKALPETGNENSGSNNATLFGGLFAALGSLLLFGRRKKQNK.

An N-terminal signal peptide occupies residues 1-35; sequence MLNRENKTAITRKGMVSNRLNKFSIRKYTVGTASI. Residues 23–34 carry the YSIRK-G/S signaling motif motif; that stretch reads FSIRKYTVGTAS. The segment at 36 to 568 is ligand binding A region; that stretch reads LVGTTLIFGL…NNQSGGAGQE (533 aa). Residues 54-185 are disordered; that stretch reads ESTNKELNEA…NKKVDAKTES (132 aa). Polar residues-rich tracts occupy residues 62–71 and 94–109; these read EATTSASDNQ and EMVSSQGNETTSNGNK. Residues 130–145 are compositionally biased toward basic and acidic residues; that stretch reads KSDEQASPKSTNEDLN. 2 stretches are compositionally biased toward polar residues: residues 146-155 and 163-173; these read TKQTISNQEA and NKSVVNAQPTN. Basic and acidic residues predominate over residues 174–183; sequence EENKKVDAKT. CNA-B domains lie at 569 to 680, 681 to 791, 792 to 901, 902 to 1012, and 1013 to 1123; these read VYKI…IYKP, KYNL…YKTP, KYNL…FYKP, TYNL…YKTP, and KYSL…EEDT. 3 disordered regions span residues 857–884, 972–991, and 1078–1341; these read ETPSGYTPTQVGSGTDEGIDSNGTSTTG, YTPTSVTSGNDTEKDSNGLT, and EKPA…SNNA. 2 stretches are compositionally biased toward polar residues: residues 860 to 869 and 972 to 981; these read SGYTPTQVGS and YTPTSVTSGN. Composition is skewed to acidic residues over residues 1091–1101 and 1118–1304; these read TEDDKDADGGE and YFEE…DSDS. An LPXTG sorting signal motif is present at residues 1328–1332; sequence LPETG. Thr-1331 bears the Pentaglycyl murein peptidoglycan amidated threonine mark. Residues 1332–1365 constitute a propeptide, removed by sortase; it reads GNENSGSNNATLFGGLFAALGSLLLFGRRKKQNK.

Belongs to the serine-aspartate repeat-containing protein (SDr) family. As to quaternary structure, interacts with host DSG1; this interaction increases S.aureus adherence to keratinocytes.

The protein resides in the secreted. The protein localises to the cell wall. In terms of biological role, cell surface-associated calcium-binding protein which plays an important role in adhesion and pathogenesis. Mediates interactions with components of the extracellular matrix such as host DSG1 to promote bacterial adhesion to host cells. Contributes to the resistance to killing by innate immune components such as neutrophils present in blood and thus attenuates bacterial clearance. The protein is Serine-aspartate repeat-containing protein D (sdrD) of Staphylococcus aureus (strain MSSA476).